The following is a 126-amino-acid chain: MRHYEIVFMVHPDQSEQVPGMIERYTASVKEAGGQVHRLEDWGRRQLAYPINKLHKAHYVLMNVEAPQNVIDELETNFRYNDAVLRSLVLHTKAAVTEASPMLKAKDERKAPEALVEEVEAEDADE.

Residues 103-126 (LKAKDERKAPEALVEEVEAEDADE) form a disordered region. The segment covering 115–126 (LVEEVEAEDADE) has biased composition (acidic residues).

This sequence belongs to the bacterial ribosomal protein bS6 family.

Binds together with bS18 to 16S ribosomal RNA. In Glaesserella parasuis serovar 5 (strain SH0165) (Haemophilus parasuis), this protein is Small ribosomal subunit protein bS6.